The following is a 119-amino-acid chain: Large ribosomal subunit protein uL18 (119 aa).

This sequence belongs to the universal ribosomal protein uL18 family. Part of the 50S ribosomal subunit; part of the 5S rRNA/L5/L18/L25 subcomplex. Contacts the 5S and 23S rRNAs.

This is one of the proteins that bind and probably mediate the attachment of the 5S RNA into the large ribosomal subunit, where it forms part of the central protuberance. This chain is Large ribosomal subunit protein uL18, found in Oceanobacillus iheyensis (strain DSM 14371 / CIP 107618 / JCM 11309 / KCTC 3954 / HTE831).